The sequence spans 261 residues: Thiamine thiazole synthase (261 aa).

NAD(+) is bound by residues Ala-33, 52–53 (ER), Gly-60, Val-124, and 152–154 (HVD). Residues Asp-154 and His-169 each contribute to the Fe cation site. Ile-219 lines the NAD(+) pocket. Residue Arg-229 coordinates glycine.

It belongs to the THI4 family. Homooctamer; tetramer of dimers. Fe(2+) serves as cofactor.

The enzyme catalyses hydrogen sulfide + glycine + NAD(+) = ADP-5-ethyl-4-methylthiazole-2-carboxylate + nicotinamide + 3 H2O + H(+). Its pathway is cofactor biosynthesis; thiamine diphosphate biosynthesis. In terms of biological role, involved in the biosynthesis of the thiazole moiety of thiamine. Catalyzes the conversion of NAD and glycine to adenosine diphosphate 5-(2-hydroxyethyl)-4-methylthiazole-2-carboxylate (ADT), an adenylated thiazole intermediate, using free sulfide as a source of sulfur. In Pyrobaculum calidifontis (strain DSM 21063 / JCM 11548 / VA1), this protein is Thiamine thiazole synthase.